A 188-amino-acid chain; its full sequence is Threonylcarbamoyl-AMP synthase (188 aa).

The YrdC-like domain occupies 8 to 188 (EGAQPGLHAY…DLATGKILRA (181 aa)).

Belongs to the SUA5 family. TsaC subfamily.

The protein localises to the cytoplasm. It carries out the reaction L-threonine + hydrogencarbonate + ATP = L-threonylcarbamoyladenylate + diphosphate + H2O. Required for the formation of a threonylcarbamoyl group on adenosine at position 37 (t(6)A37) in tRNAs that read codons beginning with adenine. Catalyzes the conversion of L-threonine, HCO(3)(-)/CO(2) and ATP to give threonylcarbamoyl-AMP (TC-AMP) as the acyladenylate intermediate, with the release of diphosphate. This is Threonylcarbamoyl-AMP synthase from Thiobacillus denitrificans (strain ATCC 25259 / T1).